The primary structure comprises 74 residues: Male-specific sperm protein Mst84Db (74 aa).

This sequence belongs to the MST(3)CGP family. Testis.

This chain is Male-specific sperm protein Mst84Db (Mst84Db), found in Drosophila melanogaster (Fruit fly).